A 445-amino-acid polypeptide reads, in one-letter code: Phosphoglucosamine mutase (445 aa).

The active-site Phosphoserine intermediate is the Ser-101. 4 residues coordinate Mg(2+): Ser-101, Asp-240, Asp-242, and Asp-244. The residue at position 101 (Ser-101) is a Phosphoserine.

This sequence belongs to the phosphohexose mutase family. Requires Mg(2+) as cofactor. In terms of processing, activated by phosphorylation.

It carries out the reaction alpha-D-glucosamine 1-phosphate = D-glucosamine 6-phosphate. In terms of biological role, catalyzes the conversion of glucosamine-6-phosphate to glucosamine-1-phosphate. The protein is Phosphoglucosamine mutase of Pseudomonas paraeruginosa (strain DSM 24068 / PA7) (Pseudomonas aeruginosa (strain PA7)).